We begin with the raw amino-acid sequence, 396 residues long: MPPKKGGDGIKPPPIIGRFGTSLKIGIVGLPNVGKSTFFNVLTNSQASAENFPFCTIDPNESRVPVPDERFDSLCQYHKPASKIPAFLNVVDIAGLVKGAHNGQGLGNAFLSHISACDGIFHLTRAFEDDDITHVEGSVDPIRDIEIIHEELQLKDEEMIGPIIDKLEKVAVRGGDKKLKPEYDIMCKVKSWVIDQKKPVRFYHDWNDKEIEVLNKHLFLTSKPMVYLVNLSEKDYIRKKNKWLIKIKEWVDKYDPGALVIPFSGALELKLQELSAEERQKYLEANMTQSALPKIIKAGFAALQLEYFFTAGPEEVRAWTIRKGTKAPQAAGKIHTDFEKGFIMAEVMKYEDFKEEGSENAVKAAGKYRQQGRNYIVEDGDIIFFKFNTPQQPKKK.

Residues 23 to 283 (LKIGIVGLPN…LSAEERQKYL (261 aa)) enclose the OBG-type G domain. 32-37 (NVGKST) lines the ATP pocket. Positions 36 and 56 each coordinate Mg(2+). ATP is bound at residue Leu231. The Nuclear export signal motif lies at 267 to 274 (LELKLQEL). Lys294 bears the N6-acetyllysine mark. The TGS domain occupies 304 to 387 (QLEYFFTAGP…EDGDIIFFKF (84 aa)).

This sequence belongs to the TRAFAC class OBG-HflX-like GTPase superfamily. OBG GTPase family. YchF/OLA1 subfamily. Monomer. The cofactor is Mg(2+).

The protein resides in the cytoplasm. It localises to the nucleus. The protein localises to the nucleolus. Hydrolyzes ATP, and can also hydrolyze GTP with lower efficiency. Has lower affinity for GTP. The protein is Obg-like ATPase 1 of Pongo abelii (Sumatran orangutan).